The following is a 252-amino-acid chain: Imidazole glycerol phosphate synthase subunit HisF (252 aa).

Residues Asp-11 and Asp-130 contribute to the active site.

It belongs to the HisA/HisF family. Heterodimer of HisH and HisF.

The protein resides in the cytoplasm. The catalysed reaction is 5-[(5-phospho-1-deoxy-D-ribulos-1-ylimino)methylamino]-1-(5-phospho-beta-D-ribosyl)imidazole-4-carboxamide + L-glutamine = D-erythro-1-(imidazol-4-yl)glycerol 3-phosphate + 5-amino-1-(5-phospho-beta-D-ribosyl)imidazole-4-carboxamide + L-glutamate + H(+). The protein operates within amino-acid biosynthesis; L-histidine biosynthesis; L-histidine from 5-phospho-alpha-D-ribose 1-diphosphate: step 5/9. IGPS catalyzes the conversion of PRFAR and glutamine to IGP, AICAR and glutamate. The HisF subunit catalyzes the cyclization activity that produces IGP and AICAR from PRFAR using the ammonia provided by the HisH subunit. In Syntrophomonas wolfei subsp. wolfei (strain DSM 2245B / Goettingen), this protein is Imidazole glycerol phosphate synthase subunit HisF.